A 76-amino-acid polypeptide reads, in one-letter code: Omega-scoloptoxin(13)-Ssm2b (76 aa).

A signal peptide spans 1–22; that stretch reads MAYIYALIFAIVVCMNTDVIQA.

It belongs to the scoloptoxin-13 family. In terms of processing, contains 3 disulfide bonds. Expressed by the venom gland.

The protein resides in the secreted. Functionally, inhibits voltage-gated calcium channel (Cav) currents. The sequence is that of Omega-scoloptoxin(13)-Ssm2b from Scolopendra mutilans (Chinese red-headed centipede).